The chain runs to 593 residues: Proline--tRNA ligase (593 aa).

The protein belongs to the class-II aminoacyl-tRNA synthetase family. ProS type 1 subfamily. Homodimer.

Its subcellular location is the cytoplasm. The catalysed reaction is tRNA(Pro) + L-proline + ATP = L-prolyl-tRNA(Pro) + AMP + diphosphate. Functionally, catalyzes the attachment of proline to tRNA(Pro) in a two-step reaction: proline is first activated by ATP to form Pro-AMP and then transferred to the acceptor end of tRNA(Pro). As ProRS can inadvertently accommodate and process non-cognate amino acids such as alanine and cysteine, to avoid such errors it has two additional distinct editing activities against alanine. One activity is designated as 'pretransfer' editing and involves the tRNA(Pro)-independent hydrolysis of activated Ala-AMP. The other activity is designated 'posttransfer' editing and involves deacylation of mischarged Ala-tRNA(Pro). The misacylated Cys-tRNA(Pro) is not edited by ProRS. In Parasynechococcus marenigrum (strain WH8102), this protein is Proline--tRNA ligase.